A 379-amino-acid polypeptide reads, in one-letter code: Probable tRNA sulfurtransferase (379 aa).

The region spanning 52-157 is the THUMP domain; that stretch reads DEFLDKLKFI…RHHAFVFCKI (106 aa). ATP-binding positions include 175–176, Arg257, Gly279, and Gln288; that span reads LL.

This sequence belongs to the ThiI family.

Its subcellular location is the cytoplasm. The enzyme catalyses [ThiI sulfur-carrier protein]-S-sulfanyl-L-cysteine + a uridine in tRNA + 2 reduced [2Fe-2S]-[ferredoxin] + ATP + H(+) = [ThiI sulfur-carrier protein]-L-cysteine + a 4-thiouridine in tRNA + 2 oxidized [2Fe-2S]-[ferredoxin] + AMP + diphosphate. The catalysed reaction is [ThiS sulfur-carrier protein]-C-terminal Gly-Gly-AMP + S-sulfanyl-L-cysteinyl-[cysteine desulfurase] + AH2 = [ThiS sulfur-carrier protein]-C-terminal-Gly-aminoethanethioate + L-cysteinyl-[cysteine desulfurase] + A + AMP + 2 H(+). The protein operates within cofactor biosynthesis; thiamine diphosphate biosynthesis. Functionally, catalyzes the ATP-dependent transfer of a sulfur to tRNA to produce 4-thiouridine in position 8 of tRNAs, which functions as a near-UV photosensor. Also catalyzes the transfer of sulfur to the sulfur carrier protein ThiS, forming ThiS-thiocarboxylate. This is a step in the synthesis of thiazole, in the thiamine biosynthesis pathway. The sulfur is donated as persulfide by IscS. The protein is Probable tRNA sulfurtransferase of Mycoplasmopsis pulmonis (strain UAB CTIP) (Mycoplasma pulmonis).